A 228-amino-acid polypeptide reads, in one-letter code: Endonuclease V (228 aa).

Mg(2+) contacts are provided by aspartate 43 and aspartate 109.

The protein belongs to the endonuclease V family. Requires Mg(2+) as cofactor.

Its subcellular location is the cytoplasm. The enzyme catalyses Endonucleolytic cleavage at apurinic or apyrimidinic sites to products with a 5'-phosphate.. Functionally, DNA repair enzyme involved in the repair of deaminated bases. Selectively cleaves double-stranded DNA at the second phosphodiester bond 3' to a deoxyinosine leaving behind the intact lesion on the nicked DNA. This is Endonuclease V from Dictyoglomus turgidum (strain DSM 6724 / Z-1310).